Reading from the N-terminus, the 266-residue chain is MIEIKNVSKTYPNGTKGLKNIDLTIERGEFVVVVGLSGAGKSTLLRSINRLNEITDGEILIDGLSITKAKGKELRQIRQRTAMIFQSFNLVKRSSVLRNVLSGRVGYHGTLRTVLNLFPKQDVELALQALNRVNILEKAYSRASDLSGGQQQRVAIARALAQEPSVILADEPTASLDPLTTKQVMDDLKRINKEDKITTIVNLHFIDLAREYATRIIGLRAGEVVFDGPVSEATDEKFAEIYGRPIQEDELLGEELDEPASEHASQ.

Positions 2–246 (IEIKNVSKTY…KFAEIYGRPI (245 aa)) constitute an ABC transporter domain. 35-42 (GLSGAGKS) is a binding site for ATP.

The protein belongs to the ABC transporter superfamily. Phosphonates importer (TC 3.A.1.9.1) family. As to quaternary structure, the complex is composed of two ATP-binding proteins (PhnC), two transmembrane proteins (PhnE) and a solute-binding protein (PhnD).

It is found in the cell membrane. The catalysed reaction is phosphonate(out) + ATP + H2O = phosphonate(in) + ADP + phosphate + H(+). Part of the ABC transporter complex PhnCDE involved in phosphonates import. Responsible for energy coupling to the transport system. This Shouchella clausii (strain KSM-K16) (Alkalihalobacillus clausii) protein is Phosphonates import ATP-binding protein PhnC.